The chain runs to 237 residues: Phosphoribosylaminoimidazole-succinocarboxamide synthase (237 aa).

It belongs to the SAICAR synthetase family.

The catalysed reaction is 5-amino-1-(5-phospho-D-ribosyl)imidazole-4-carboxylate + L-aspartate + ATP = (2S)-2-[5-amino-1-(5-phospho-beta-D-ribosyl)imidazole-4-carboxamido]succinate + ADP + phosphate + 2 H(+). The protein operates within purine metabolism; IMP biosynthesis via de novo pathway; 5-amino-1-(5-phospho-D-ribosyl)imidazole-4-carboxamide from 5-amino-1-(5-phospho-D-ribosyl)imidazole-4-carboxylate: step 1/2. In Klebsiella pneumoniae (strain 342), this protein is Phosphoribosylaminoimidazole-succinocarboxamide synthase.